Consider the following 269-residue polypeptide: Type 4 prepilin-like proteins leader peptide-processing enzyme (269 aa).

7 helical membrane passes run M13–W33, Y102–E122, G124–L144, Q147–A167, V178–V198, L210–I230, and L249–F269.

This sequence belongs to the peptidase A24 family.

The protein resides in the cell inner membrane. The catalysed reaction is Typically cleaves a -Gly-|-Phe- bond to release an N-terminal, basic peptide of 5-8 residues from type IV prepilin, and then N-methylates the new N-terminal amino group, the methyl donor being S-adenosyl-L-methionine.. Cleaves type-4 fimbrial leader sequence and methylates the N-terminal (generally Phe) residue. The sequence is that of Type 4 prepilin-like proteins leader peptide-processing enzyme from Escherichia coli O78:H11 (strain H10407 / ETEC).